The sequence spans 398 residues: Thyrotropin-releasing hormone receptor (398 aa).

Over 1-28 (MENETGSELNQTQLQPRAVVALEYQVVT) the chain is Extracellular. 2 N-linked (GlcNAc...) asparagine glycosylation sites follow: Asn3 and Asn10. A helical membrane pass occupies residues 29 to 51 (ILLVLIICGLGIVGNIMVVLVVM). Topologically, residues 52–61 (RTKHMRTPTN) are cytoplasmic. A helical transmembrane segment spans residues 62–83 (CYLVSLAVADLMVLVAAGLPNI). At 84 to 99 (TDSIYGSWVYGYVGCL) the chain is on the extracellular side. A disulfide bond links Cys98 and Cys179. Residues 100 to 121 (CITYLQYLGINASSCSITAFTI) traverse the membrane as a helical segment. Residues 122-144 (ERYIAICHPIKAQFLCTFSRAKK) lie on the Cytoplasmic side of the membrane. A helical membrane pass occupies residues 145–168 (IIIFVWAFTSIYCMLWFFLLDLNI). At 169-193 (STYKDAIVVSCGYKISRNYYSPIYL) the chain is on the extracellular side. The chain crosses the membrane as a helical span at residues 194–215 (MDFGVFYVVPMILATVLYGFIA). The Cytoplasmic segment spans residues 216-266 (RILFLNPIPSDPKENSNMWKNDSTHQNKNLNSKTSNRYFNSTVSSRKQVTK). The helical transmembrane segment at 267 to 288 (MLAVVVILFALLWMPYRTLVVV) threads the bilayer. Residues 289–296 (NSFLSSPF) are Extracellular-facing. A helical membrane pass occupies residues 297-319 (QENWFLLFCRICIYLNSAINPVI). The Cytoplasmic portion of the chain corresponds to 320 to 398 (YNLMSQKFRA…LASEITFNQS (79 aa)).

This sequence belongs to the G-protein coupled receptor 1 family.

The protein localises to the cell membrane. Its function is as follows. Receptor for thyrotropin-releasing hormone (TRH). Upon ligand binding, this G-protein-coupled receptor triggers activation of the phosphatidylinositol (IP3)-calcium-protein kinase C (PKC) pathway. This is Thyrotropin-releasing hormone receptor (TRHR) from Bos taurus (Bovine).